We begin with the raw amino-acid sequence, 32 residues long: Fimbrin sef21 (32 aa).

It is found in the fimbrium. This is Fimbrin sef21 from Salmonella enteritidis.